The chain runs to 115 residues: MDMKMTFSGLVLVVLVTTVVGSSVRRGENSDNLTHCRLFEFRLCLLECMSLTLDHCYARCTTVITQIHGSDTNRFDCTIFKTCYYRCYVLGKTEDHCWKGTATSVTGDVGDLEFC.

Positions 1-21 are cleaved as a signal peptide; it reads MDMKMTFSGLVLVVLVTTVVG. The propeptide occupies 22 to 26; the sequence is SSVRR. 5 cysteine pairs are disulfide-bonded: Cys36/Cys77, Cys44/Cys60, Cys48/Cys56, Cys83/Cys115, and Cys87/Cys97. Glu40 provides a ligand contact to Zn(2+). His68 is a Zn(2+) binding site.

As to quaternary structure, mostly found as a homodimer in solution; non-covalently bound. In terms of tissue distribution, expressed by the venom duct.

The protein resides in the secreted. Modestly and reversibly inhibits Cav2.3/CACNA1E (IC(50)=5.8 uM) recombinantly expressed in HEK293 cells without affecting the voltage dependence of activation. In mouse DRG sensory neurons, modulates depolarization-induced calcium influx. In Conus mucronatus (Pointed cone), this protein is Macroconotoxin Mu8.1.